Here is a 140-residue protein sequence, read N- to C-terminus: Large ribosomal subunit protein uL11 (140 aa).

The protein belongs to the universal ribosomal protein uL11 family. As to quaternary structure, part of the ribosomal stalk of the 50S ribosomal subunit. Interacts with L10 and the large rRNA to form the base of the stalk. L10 forms an elongated spine to which L12 dimers bind in a sequential fashion forming a multimeric L10(L12)X complex. One or more lysine residues are methylated.

Forms part of the ribosomal stalk which helps the ribosome interact with GTP-bound translation factors. In Geobacter metallireducens (strain ATCC 53774 / DSM 7210 / GS-15), this protein is Large ribosomal subunit protein uL11.